A 336-amino-acid polypeptide reads, in one-letter code: Holliday junction branch migration complex subunit RuvB (336 aa).

The interval Met-1–Tyr-180 is large ATPase domain (RuvB-L). ATP-binding positions include Leu-18, Arg-19, Gly-60, Lys-63, Thr-64, Thr-65, Glu-127–Phe-129, Arg-170, Tyr-180, and Arg-217. Thr-64 is a binding site for Mg(2+). The segment at Thr-181–Gly-251 is small ATPAse domain (RuvB-S). The interval Glu-254–Pro-336 is head domain (RuvB-H). Arg-309 and Arg-314 together coordinate DNA.

Belongs to the RuvB family. In terms of assembly, homohexamer. Forms an RuvA(8)-RuvB(12)-Holliday junction (HJ) complex. HJ DNA is sandwiched between 2 RuvA tetramers; dsDNA enters through RuvA and exits via RuvB. An RuvB hexamer assembles on each DNA strand where it exits the tetramer. Each RuvB hexamer is contacted by two RuvA subunits (via domain III) on 2 adjacent RuvB subunits; this complex drives branch migration. In the full resolvosome a probable DNA-RuvA(4)-RuvB(12)-RuvC(2) complex forms which resolves the HJ.

The protein localises to the cytoplasm. The enzyme catalyses ATP + H2O = ADP + phosphate + H(+). In terms of biological role, the RuvA-RuvB-RuvC complex processes Holliday junction (HJ) DNA during genetic recombination and DNA repair, while the RuvA-RuvB complex plays an important role in the rescue of blocked DNA replication forks via replication fork reversal (RFR). RuvA specifically binds to HJ cruciform DNA, conferring on it an open structure. The RuvB hexamer acts as an ATP-dependent pump, pulling dsDNA into and through the RuvAB complex. RuvB forms 2 homohexamers on either side of HJ DNA bound by 1 or 2 RuvA tetramers; 4 subunits per hexamer contact DNA at a time. Coordinated motions by a converter formed by DNA-disengaged RuvB subunits stimulates ATP hydrolysis and nucleotide exchange. Immobilization of the converter enables RuvB to convert the ATP-contained energy into a lever motion, pulling 2 nucleotides of DNA out of the RuvA tetramer per ATP hydrolyzed, thus driving DNA branch migration. The RuvB motors rotate together with the DNA substrate, which together with the progressing nucleotide cycle form the mechanistic basis for DNA recombination by continuous HJ branch migration. Branch migration allows RuvC to scan DNA until it finds its consensus sequence, where it cleaves and resolves cruciform DNA. This Thermus thermophilus (strain ATCC BAA-163 / DSM 7039 / HB27) protein is Holliday junction branch migration complex subunit RuvB.